The following is a 134-amino-acid chain: Protein OPG030 (134 aa).

One can recognise a BACK domain in the interval 88 to 133 (YKENGLRNSFLRQYINNNIEEIRNTDQFLKFDVDSVCDILNNDETI).

The protein belongs to the orthopoxvirus OPG030 family.

The sequence is that of Protein OPG030 (OPG30) from Variola virus (isolate Human/India/Ind3/1967) (VARV).